The following is a 205-amino-acid chain: Small ribosomal subunit protein uS4 (205 aa).

A disordered region spans residues 1–46 (MSKRASSKYKIDRRMGENIWGRPKSPVNRREYGPGQHGQRRKGKLS). In terms of domain architecture, S4 RNA-binding spans 94–154 (SRLDAIVYRA…QKSKQLAIVL (61 aa)).

It belongs to the universal ribosomal protein uS4 family. As to quaternary structure, part of the 30S ribosomal subunit. Contacts protein S5. The interaction surface between S4 and S5 is involved in control of translational fidelity.

One of the primary rRNA binding proteins, it binds directly to 16S rRNA where it nucleates assembly of the body of the 30S subunit. In terms of biological role, with S5 and S12 plays an important role in translational accuracy. The sequence is that of Small ribosomal subunit protein uS4 from Allorhizobium ampelinum (strain ATCC BAA-846 / DSM 112012 / S4) (Agrobacterium vitis (strain S4)).